The chain runs to 434 residues: Adenylosuccinate synthetase (434 aa).

GTP-binding positions include 22 to 28 and 50 to 52; these read GDEGKGK and GHT. Residue Asp23 is the Proton acceptor of the active site. Positions 23 and 50 each coordinate Mg(2+). Residues 23–26, 48–51, Thr139, Arg153, Gln234, Thr249, and Arg313 contribute to the IMP site; these read DEGK and NAGH. Residue His51 is the Proton donor of the active site. 309–315 contributes to the substrate binding site; that stretch reads ATTGRKR. Residues Arg315, 341–343, and 423–425 each bind GTP; these read KLD and SVG.

It belongs to the adenylosuccinate synthetase family. As to quaternary structure, homodimer. It depends on Mg(2+) as a cofactor.

Its subcellular location is the cytoplasm. The catalysed reaction is IMP + L-aspartate + GTP = N(6)-(1,2-dicarboxyethyl)-AMP + GDP + phosphate + 2 H(+). Its pathway is purine metabolism; AMP biosynthesis via de novo pathway; AMP from IMP: step 1/2. Its function is as follows. Plays an important role in the de novo pathway of purine nucleotide biosynthesis. Catalyzes the first committed step in the biosynthesis of AMP from IMP. This chain is Adenylosuccinate synthetase, found in Chlorobium limicola (strain DSM 245 / NBRC 103803 / 6330).